A 346-amino-acid polypeptide reads, in one-letter code: Methionine import ATP-binding protein MetN 1 (346 aa).

The region spanning 2–241 (IELKNVSKVF…PQHVTTKKFV (240 aa)) is the ABC transporter domain. 38–45 (GYSGAGKS) contributes to the ATP binding site.

This sequence belongs to the ABC transporter superfamily. Methionine importer (TC 3.A.1.24) family. In terms of assembly, the complex is composed of two ATP-binding proteins (MetN), two transmembrane proteins (MetI) and a solute-binding protein (MetQ).

Its subcellular location is the cell membrane. The catalysed reaction is L-methionine(out) + ATP + H2O = L-methionine(in) + ADP + phosphate + H(+). It catalyses the reaction D-methionine(out) + ATP + H2O = D-methionine(in) + ADP + phosphate + H(+). Part of the ABC transporter complex MetNIQ involved in methionine import. Responsible for energy coupling to the transport system. This chain is Methionine import ATP-binding protein MetN 1, found in Bacillus cereus (strain ATCC 10987 / NRS 248).